Here is a 355-residue protein sequence, read N- to C-terminus: Cyanide hydratase (355 aa).

In terms of domain architecture, CN hydrolase spans 6–285 (YKAAAVTSEP…DGLLFVDIDL (280 aa)). The active-site Proton acceptor is Glu46. Lys128 is an active-site residue. Cys163 (nucleophile) is an active-site residue.

This sequence belongs to the carbon-nitrogen hydrolase superfamily. Nitrilase family. Oligomer of dimers, forming left-handed helical fibers.

It carries out the reaction formamide = hydrogen cyanide + H2O. Catalyzes the hydration of cyanide to formamide. Degradation of cyanide may be important for plant pathogenic fungi in infection of cyanogenic plants. The polypeptide is Cyanide hydratase (Gibberella zeae (strain ATCC MYA-4620 / CBS 123657 / FGSC 9075 / NRRL 31084 / PH-1) (Wheat head blight fungus)).